Here is a 36-residue protein sequence, read N- to C-terminus: Mu-agatoxin-Aa1a (36 aa).

Intrachain disulfides connect C2-C17, C9-C22, C16-C32, and C24-C30. N36 is subject to Asparagine amide.

The protein belongs to the neurotoxin 07 (Beta/delta-agtx) family. 04 (aga-5) subfamily. In terms of tissue distribution, expressed by the venom gland.

The protein localises to the secreted. In terms of biological role, insecticidal neurotoxin that induces an irreversible spastic paralysis when injected into insects. Modifies presynaptic voltage-gated sodium channels (Nav), causing them to open at the normal resting potential of the nerve. This leads to spontaneous release of neurotransmitter and repetitive action potentials in motor neurons. The protein is Mu-agatoxin-Aa1a of Agelenopsis aperta (North American funnel-web spider).